The primary structure comprises 343 residues: Uroporphyrinogen decarboxylase (343 aa).

Substrate contacts are provided by residues 24 to 28 (RQAGR), Phe-43, Asp-74, Tyr-151, Ser-206, and His-321.

Belongs to the uroporphyrinogen decarboxylase family. In terms of assembly, homodimer.

Its subcellular location is the cytoplasm. The enzyme catalyses uroporphyrinogen III + 4 H(+) = coproporphyrinogen III + 4 CO2. It participates in porphyrin-containing compound metabolism; protoporphyrin-IX biosynthesis; coproporphyrinogen-III from 5-aminolevulinate: step 4/4. Catalyzes the decarboxylation of four acetate groups of uroporphyrinogen-III to yield coproporphyrinogen-III. In Thermosynechococcus vestitus (strain NIES-2133 / IAM M-273 / BP-1), this protein is Uroporphyrinogen decarboxylase.